Here is a 426-residue protein sequence, read N- to C-terminus: Meiotically up-regulated gene 170 protein (426 aa).

It belongs to the arrestin family.

It localises to the cytoplasm. The protein resides in the nucleus. Has a role in meiosis. The chain is Meiotically up-regulated gene 170 protein (mug170) from Schizosaccharomyces pombe (strain 972 / ATCC 24843) (Fission yeast).